Here is a 287-residue protein sequence, read N- to C-terminus: Undecaprenyl-diphosphatase (287 aa).

Helical transmembrane passes span 6–26 (LHLL…FIPV), 45–65 (SGKV…MWIF), 89–109 (NLLL…KSIK), 111–131 (VFYH…IMLW), 204–224 (ATEF…VYDL), 238–258 (AIAV…RAVL), and 266–286 (YRVF…WIYA).

This sequence belongs to the UppP family.

It is found in the cell inner membrane. The catalysed reaction is di-trans,octa-cis-undecaprenyl diphosphate + H2O = di-trans,octa-cis-undecaprenyl phosphate + phosphate + H(+). In terms of biological role, catalyzes the dephosphorylation of undecaprenyl diphosphate (UPP). Confers resistance to bacitracin. This is Undecaprenyl-diphosphatase from Bordetella bronchiseptica (strain ATCC BAA-588 / NCTC 13252 / RB50) (Alcaligenes bronchisepticus).